We begin with the raw amino-acid sequence, 787 residues long: Protein translocase subunit SecA (787 aa).

Residues glutamine 85, 103-107 (GEGKT), and aspartate 492 each bind ATP.

This sequence belongs to the SecA family. In terms of assembly, monomer and homodimer. Part of the essential Sec protein translocation apparatus which comprises SecA, SecYEG and auxiliary proteins SecDF. Other proteins may also be involved.

The protein localises to the cell membrane. It localises to the cytoplasm. The catalysed reaction is ATP + H2O + cellular proteinSide 1 = ADP + phosphate + cellular proteinSide 2.. In terms of biological role, part of the Sec protein translocase complex. Interacts with the SecYEG preprotein conducting channel. Has a central role in coupling the hydrolysis of ATP to the transfer of proteins into and across the cell membrane, serving as an ATP-driven molecular motor driving the stepwise translocation of polypeptide chains across the membrane. This chain is Protein translocase subunit SecA, found in Limosilactobacillus reuteri (strain DSM 20016) (Lactobacillus reuteri).